The sequence spans 316 residues: Polyprenyl transferase ausN (316 aa).

9 helical membrane-spanning segments follow: residues 45–65, 69–89, 108–128, 129–149, 163–183, 188–208, 233–253, 256–276, and 296–316; these read VVGV…TFLL, VILS…NDLI, GAVS…CGGS, LLLL…FFAL, LILT…DMNP, IPTL…DIVY, DQIA…GGIL, LGIP…LRFL, and SCLL…CVRL.

This sequence belongs to the UbiA prenyltransferase family. Requires Mg(2+) as cofactor.

The protein localises to the membrane. The enzyme catalyses 3,5-dimethylorsellinate + (2E,6E)-farnesyl diphosphate = (3R)-3-farnesyl-6-hydroxy-2,3,5-trimethyl-4-oxocyclohexa-1,5-diene-1-carboxylate + diphosphate + H(+). Its pathway is secondary metabolite biosynthesis; terpenoid biosynthesis. Its function is as follows. Polyprenyl transferase; part of the gene cluster A that mediates the biosynthesis of the fungal meroterpenoid acetoxydehydroaustin. The first step of the pathway is the synthesis of 3,5-dimethylorsellinic acid by the polyketide synthase ausA. 3,5-dimethylorsellinic acid is then prenylated by the polyprenyl transferase ausN. Further epoxidation by the FAD-dependent monooxygenase ausM and cyclization by the probable terpene cyclase ausL lead to the formation of protoaustinoid A. Protoaustinoid A is then oxidized to spiro-lactone preaustinoid A3 by the combined action of the FAD-binding monooxygenases ausB and ausC, and the dioxygenase ausE. Acid-catalyzed keto-rearrangement and ring contraction of the tetraketide portion of preaustinoid A3 by ausJ lead to the formation of preaustinoid A4. The aldo-keto reductase ausK, with the help of ausH, is involved in the next step by transforming preaustinoid A4 into isoaustinone which is in turn hydroxylated by the P450 monooxygenase ausI to form austinolide. The cytochrome P450 monooxygenase ausG then modifies austinolide to austinol. Austinol is further acetylated to austin by the O-acetyltransferase ausP, which spontaneously changes to dehydroaustin. The cytochrome P450 monooxygenase then converts dehydroaustin is into 7-dehydrodehydroaustin. The hydroxylation catalyzed by ausR permits the second O-acetyltransferase ausQ to add an additional acetyl group to the molecule, leading to the formation of acetoxydehydroaustin. Due to genetic rearrangements of the clusters and the subsequent loss of some enzymes, the end product of the Penicillium brasilianum austinoid biosynthesis clusters is acetoxydehydroaustin. This Penicillium brasilianum protein is Polyprenyl transferase ausN.